The following is a 1578-amino-acid chain: MGNQDGKLKRSAGDASHEGGGAEDAAGPRDAEITKKASGSKKALGKHGKGGGGSGETSKKKSKSDSRASVFSNLRIRKNLTKGKGACDSREDVLDSQALPIGELDSAHSIVTKTPDLSLSAEETGLSDTECADPFEVIHPGASRPAEAGVGIQATAEDLETAAGAQDGQRTSSGSDTDIYSFHSATEQEDLLSDIQQAIRLQQQQQQKLLLQDSEEPAAPPTAISPQPGAFLGLDQFLLGPRSEAEKDTVQALPVRPDLPETTKSLVPEHPPSSGSHLTSETPGYATAPSAVTDSLSSPAFTFPEAGPGEGAAGVPVAGTGDTDEECEEDAFEDAPRGSPGEEWVPEVEEASQRLEKEPEEGMRESITSAVVSLPGSPAPSPRCFKPYPLITPCYIKTTTRQLSSPNHSPSQSPNQSPRIKKRPDPSVSRSSRTALASAAAPAKKHRLEGGLTGGLSRSADWTEELGVRTPGAGGSVHLLGRGATADDSGGGSPVLAAKAPGAPATADGFQNVFTGRTLLEKLFSQQENGPPEEAEKFCSRIIAMGLLLPFSDCFREPCNQNAGSSSAPFDQDQLYTWAAVSQPTHSMDYSEGQFPRREPSMWPSSKLPEEEPSPKDVDTEPKSSILESPKKCSNGVQQEVFDVKSEGQATVIQQLEQTIEDLRTKIAELEKQYPALDLEGPRGLSGLENGLTASADVSLDALVLHGKVAQPPRTLEAKSIQTSPTEEGRILTLPPPKAPPEGLLGSPAAASGESALLTSPSGPQTKFCSEISLIVSPRRISVQLDAQQIQSASQLPPPPPLLGSDSQGQPSQPSLHTESETSHEHSVSSSFGNNCNVPPAPPLPCTESSSFMPGLGMAIPPPPCLSDITVPALPSPTAPALQFSNLQGPEMLPAPPQPPPLPGLGVPPPPPAPPLPGMGIPPPPPLPGMGIPPPPPLPGMGISPLPPLPGMGIPPPPPLPGVGIPPPPPLPGVGIPPPPPLPGVGIPPPPPLPGVGIPPPPPLPGVGIPPPPPLPGVGIPPPPPLPGVGIPPPPPLPGVGIPPPPPLPGSGIPPPPALPGVAIPPPPPLPGMGVPPPAPPPPGAGIPPPPLLPGSGPPHSSQVGSSTLPAAPQGCGFLFPPLPTGLFGLGMNQDRVARKQLIEPCRPMKPLYWTRIQLHSKRDSSPSLIWEKIEEPSIDCHEFEELFSKTAVKERKKPISDTISKTKAKQVVKLLSNKRSQAVGILMSSLHLDMKDIQHAVVNLDNSVVDLETLQALYENRAQSDELEKIEKHSRSSKDKENAKSLDKPEQFLYELSLIPNFSERVFCILFQSTFSESICSIRRKLELLQKLCETLKNGPGVMQVLGLVLAFGNYMNAGNKTRGQADGFGLDILPKLKDVKSSDNSRSLLSYIVSYYLRNFDEDAGKEQCVFPLAEPQELFQASQMKFEDFQKDLRKLKKDLKACEAEAGKVYQVSSAEHMQPFKENMEQFISQAKIDQESQEAALTETHKCFLETTAYYFMKPKLGEKEVSPNVFFSVWHEFSSDFKDAWKKENKLILQERVKEAEEVCRQKKGKSLYKVKPRHDSGIKAKISMKT.

Composition is skewed to basic and acidic residues over residues 1–17, 26–35, and 57–66; these read MGNQ…DASH, AGPRDAEITK, and TSKKKSKSDS. Residues 1–73 form a disordered region; sequence MGNQDGKLKR…SDSRASVFSN (73 aa). S89 bears the Phosphoserine mark. Disordered stretches follow at residues 208-230, 244-383, and 401-458; these read KLLL…QPGA, EAEK…PSPR, and RQLS…GLSR. Polar residues-rich tracts occupy residues 273–282 and 290–300; these read SSGSHLTSET and SAVTDSLSSPA. Positions 322 to 333 are enriched in acidic residues; the sequence is DTDEECEEDAFE. The segment covering 351–364 has biased composition (basic and acidic residues); that stretch reads ASQRLEKEPEEGMR. Composition is skewed to low complexity over residues 404 to 418 and 427 to 442; these read SSPN…NQSP and SVSR…AAAP. 3 positions are modified to phosphoserine: S459, S489, and S493. The interval 587 to 634 is disordered; the sequence is SMDYSEGQFPRREPSMWPSSKLPEEEPSPKDVDTEPKSSILESPKKCS. The span at 608–622 shows a compositional bias: basic and acidic residues; it reads LPEEEPSPKDVDTEP. Residues 643-683 are a coiled coil; it reads DVKSEGQATVIQQLEQTIEDLRTKIAELEKQYPALDLEGPR. 3 disordered regions span residues 714–765, 786–836, and 880–944; these read RTLE…SGPQ, DAQQ…GNNC, and PALQ…MGIS. Positions 735–1124 constitute an FH1 domain; sequence PPPKAPPEGL…GCGFLFPPLP (390 aa). The segment covering 786–795 has biased composition (polar residues); that stretch reads DAQQIQSASQ. The segment covering 803 to 817 has biased composition (low complexity); it reads LGSDSQGQPSQPSLH. Over residues 818 to 827 the composition is skewed to basic and acidic residues; the sequence is TESETSHEHS. A compositionally biased stretch (pro residues) spans 893 to 944; sequence LPAPPQPPPLPGLGVPPPPPAPPLPGMGIPPPPPLPGMGIPPPPPLPGMGIS. A run of 12 repeats spans residues 919–929, 930–940, 941–951, 952–962, 963–973, 974–984, 985–995, 996–1006, 1007–1017, 1018–1028, 1029–1039, and 1040–1050. Positions 919 to 1039 are 12 X 11 AA tandem repeats of [MV]-G-I-P-P-P-P-P-L-P-G; sequence MGIPPPPPLP…GIPPPPPLPG (121 aa). Residues 1037–1097 show a composition bias toward pro residues; the sequence is LPGVGIPPPP…PPPPLLPGSG (61 aa). Residues 1037–1108 form a disordered region; it reads LPGVGIPPPP…PHSSQVGSST (72 aa). An FH2 domain is found at 1139 to 1554; it reads RKQLIEPCRP…KEAEEVCRQK (416 aa). A coiled-coil region spans residues 1419 to 1455; it reads QELFQASQMKFEDFQKDLRKLKKDLKACEAEAGKVYQ. Residues 1571 to 1578 form an important for interaction with SPIRE1 region; that stretch reads KAKISMKT.

Belongs to the formin homology family. Cappuccino subfamily. In terms of assembly, interacts with SPIRE1. Binds actin. Interacts with CDKN1A. Detected in brain and in oocytes (at protein level). Expressed almost exclusively in the developing and mature central nervous system. Detected in oocytes.

It localises to the cytoplasm. Its subcellular location is the cytoskeleton. The protein resides in the cytosol. It is found in the perinuclear region. The protein localises to the nucleus. It localises to the nucleolus. Its subcellular location is the cell membrane. The protein resides in the cell cortex. It is found in the cytoplasmic vesicle membrane. Its function is as follows. Actin-binding protein that is involved in actin cytoskeleton assembly and reorganization. Acts as an actin nucleation factor and promotes assembly of actin filaments together with SPIRE1 and SPIRE2. Involved in intracellular vesicle transport along actin fibers, providing a novel link between actin cytoskeleton dynamics and intracellular transport. Required for asymmetric spindle positioning, asymmetric oocyte division and polar body extrusion during female germ cell meiosis. Plays a role in responses to DNA damage, cellular stress and hypoxia by protecting CDKN1A against degradation, and thereby plays a role in stress-induced cell cycle arrest. Also acts in the nucleus: together with SPIRE1 and SPIRE2, promotes assembly of nuclear actin filaments in response to DNA damage in order to facilitate movement of chromatin and repair factors after DNA damage. Protects cells against apoptosis by protecting CDKN1A against degradation. In Mus musculus (Mouse), this protein is Formin-2 (Fmn2).